Consider the following 321-residue polypeptide: Cytochrome c biogenesis protein CcsA (321 aa).

The next 8 membrane-spanning stretches (helical) occupy residues Val17–Leu37, Thr48–Ile68, Leu71–Phe91, Leu98–Leu118, Met143–Ile163, Ile225–Asn245, Thr259–His273, and Ala286–Leu306.

This sequence belongs to the CcmF/CycK/Ccl1/NrfE/CcsA family. May interact with Ccs1.

The protein resides in the plastid. The protein localises to the chloroplast thylakoid membrane. Its function is as follows. Required during biogenesis of c-type cytochromes (cytochrome c6 and cytochrome f) at the step of heme attachment. This Populus trichocarpa (Western balsam poplar) protein is Cytochrome c biogenesis protein CcsA.